A 1035-amino-acid polypeptide reads, in one-letter code: MQISDTGHSHMPDFHAVLAREDWQNQTITHLNRLPAHPAFASWRDELAARDNHLSTRRRQLDGEWQFVYARSPFAVDAQWLTQDLPDSRGTPVPSNWQMEGYDAPIYTNVRYPIDTTPPRVPEDNPTGCYSLHFTVEDTWRENGQTQIIFDGVNSAFHLWCNGVWVGYSQDSRLPAAFDLSPFLRPGDNRLCVMVMRWSAGSWLEDQDMWRMSGIFRSVWLLNKPQQRLCDVQLTPALDALYRDGTLQVQATVEATEAALAGLSVGVSLWRGEEQVAAGRQPLGTPAVDERGHYAERVDFALAVTAPAHWSAETPNCYRAVVTLWRGDELLEAEAWDIGFRRIEIADGLLRLNGKPLLIRGVNRHEHHYLRGQVVTEADMVQDILLMKQNNFNAVRCSHYPNAPRWYELCNRYGLYVVDEANIETHGMVPMNRLSDDPAWLPAFSARVTRMVQSNRNHPCIIIWSLGNESGGGGNHEALYHWLKRNDPSRPVQYEGGGADTTATDIICPMYARVERDQPIPAVPKWGIKKWISLPGEQRPLILCEYAHAMGNSLGNFADYWQAFREYPRLQGGFIWDWADQAIRKIFDDGSVGWAYGGDFGDKPNDRQFCMNGLVFPDRTPHPSLVEAKHAQQYFQFTLLSTSPLRVRITSEYLFRPTDNEVVRWQVQSAGETLYHGNLTLALPPEGSDEITLLDSLILPEGARAVWLTLEVTQPRATDWSEADHRVAWQQFPLPAPLALPAPTVPAGAPDLIVSDEVWQIRAGSQCWTIDRRTGLLSRWSVGGQEQLLTPLRDQFIRAPLDNDIGVSEVERIDPNAWVERWKSAGLYDLEAHCVQCDAQRLANETLVDCRWHYLRGEEVVIVSHWRMHFTADGTLRLAVDGERAETLPPLPRVGLHFQVADQQAPVSWLGLGPHENYPDRRSSACFARWEQPLAAMTTPYIFPTENGLRCDTQALDWGRWHVSGHFHFSVQPWSTRQLMETDHWHKMQAEDGVWITLDGLHMGVGGDDSWTPSVLPQWLLSQTRWQYEFFLRCL.

Substrate is bound by residues Asn-109 and Asp-208. Residue Asp-208 participates in Na(+) binding. Residues Glu-424, His-426, and Glu-469 each coordinate Mg(2+). Substrate-binding positions include Glu-469 and 545-548 (EYAH). Glu-469 (proton donor) is an active-site residue. Glu-545 serves as the catalytic Nucleophile. Asn-605 is a Mg(2+) binding site. The Na(+) site is built by Phe-609 and Asn-612. Substrate is bound by residues Asn-612 and Trp-1011.

This sequence belongs to the glycosyl hydrolase 2 family. As to quaternary structure, homotetramer. The cofactor is Mg(2+). It depends on Na(+) as a cofactor.

It carries out the reaction Hydrolysis of terminal non-reducing beta-D-galactose residues in beta-D-galactosides.. This chain is Beta-galactosidase, found in Klebsiella pneumoniae (strain 342).